The primary structure comprises 152 residues: Psoriasis susceptibility 1 candidate gene 1 protein (152 aa).

The span at 1 to 31 (MTCTDQKSHSQRALGTQTPALQGPQLLNTDP) shows a compositional bias: polar residues. Residues 1–42 (MTCTDQKSHSQRALGTQTPALQGPQLLNTDPSSEETRPPHVN) are disordered.

Expressed in skin. Also found in heart, placenta, liver, skeletal muscle and pancreas.

In Homo sapiens (Human), this protein is Psoriasis susceptibility 1 candidate gene 1 protein (PSORS1C1).